Here is a 449-residue protein sequence, read N- to C-terminus: Mannan endo-1,6-alpha-mannosidase DCW1 (449 aa).

Positions 1 to 21 are cleaved as a signal peptide; the sequence is MLVNKVIGLLGVLFATRFTNA. 12 N-linked (GlcNAc...) asparagine glycosylation sites follow: N34, N84, N109, N133, N203, N225, N240, N265, N281, N337, N362, and N420. G428 carries the GPI-anchor amidated glycine lipid modification. A propeptide spans 429 to 449 (removed in mature form); that stretch reads AGIITAVIGISIVACALWLVF.

This sequence belongs to the glycosyl hydrolase 76 family.

Its subcellular location is the cell membrane. The enzyme catalyses Random hydrolysis of (1-&gt;6)-alpha-D-mannosidic linkages in unbranched (1-&gt;6)-mannans.. In terms of biological role, required for normal synthesis of the cell wall. The sequence is that of Mannan endo-1,6-alpha-mannosidase DCW1 (DCW1) from Saccharomyces cerevisiae (strain ATCC 204508 / S288c) (Baker's yeast).